Here is a 389-residue protein sequence, read N- to C-terminus: Succinate--CoA ligase [ADP-forming] subunit beta (389 aa).

In terms of domain architecture, ATP-grasp spans 9 to 244 (KQLFEHYGLP…LTQNDAREAE (236 aa)). Residues lysine 46, 53 to 55 (GRG), glutamate 99, cysteine 102, and glutamate 107 contribute to the ATP site. Mg(2+)-binding residues include asparagine 199 and aspartate 213. Substrate is bound by residues asparagine 264 and 321 to 323 (GIV).

This sequence belongs to the succinate/malate CoA ligase beta subunit family. In terms of assembly, heterotetramer of two alpha and two beta subunits. Requires Mg(2+) as cofactor.

The catalysed reaction is succinate + ATP + CoA = succinyl-CoA + ADP + phosphate. It catalyses the reaction GTP + succinate + CoA = succinyl-CoA + GDP + phosphate. Its pathway is carbohydrate metabolism; tricarboxylic acid cycle; succinate from succinyl-CoA (ligase route): step 1/1. Functionally, succinyl-CoA synthetase functions in the citric acid cycle (TCA), coupling the hydrolysis of succinyl-CoA to the synthesis of either ATP or GTP and thus represents the only step of substrate-level phosphorylation in the TCA. The beta subunit provides nucleotide specificity of the enzyme and binds the substrate succinate, while the binding sites for coenzyme A and phosphate are found in the alpha subunit. The protein is Succinate--CoA ligase [ADP-forming] subunit beta of Haemophilus influenzae (strain ATCC 51907 / DSM 11121 / KW20 / Rd).